A 183-amino-acid polypeptide reads, in one-letter code: Threonylcarbamoyl-AMP synthase (183 aa).

Residues 1–183 form the YrdC-like domain; that stretch reads MNREQIAEAL…LRTNQLFRQG (183 aa).

It belongs to the SUA5 family. TsaC subfamily.

It localises to the cytoplasm. The enzyme catalyses L-threonine + hydrogencarbonate + ATP = L-threonylcarbamoyladenylate + diphosphate + H2O. Functionally, required for the formation of a threonylcarbamoyl group on adenosine at position 37 (t(6)A37) in tRNAs that read codons beginning with adenine. Catalyzes the conversion of L-threonine, HCO(3)(-)/CO(2) and ATP to give threonylcarbamoyl-AMP (TC-AMP) as the acyladenylate intermediate, with the release of diphosphate. This chain is Threonylcarbamoyl-AMP synthase, found in Haemophilus influenzae (strain 86-028NP).